We begin with the raw amino-acid sequence, 232 residues long: Glycerol-3-phosphate acyltransferase 4 (232 aa).

6 consecutive transmembrane segments (helical) span residues 4–24 (VFLI…AYLL), 54–76 (LGLA…AGWL), 80–99 (LWQQ…WPVF), 107–127 (GIAT…LIAL), 143–163 (VFLG…FFGV), and 168–188 (TVTW…LMAP).

It belongs to the PlsY family. In terms of assembly, probably interacts with PlsX.

Its subcellular location is the cell membrane. The catalysed reaction is an acyl phosphate + sn-glycerol 3-phosphate = a 1-acyl-sn-glycero-3-phosphate + phosphate. It participates in lipid metabolism; phospholipid metabolism. Catalyzes the transfer of an acyl group from acyl-phosphate (acyl-PO(4)) to glycerol-3-phosphate (G3P) to form lysophosphatidic acid (LPA). This enzyme utilizes acyl-phosphate as fatty acyl donor, but not acyl-CoA or acyl-ACP. The sequence is that of Glycerol-3-phosphate acyltransferase 4 from Dehalococcoides mccartyi (strain CBDB1).